Reading from the N-terminus, the 353-residue chain is UPF0283 membrane protein KPN78578_12740 (353 aa).

3 helical membrane passes run 70–90, 99–119, and 213–233; these read MVSAGLAIFGVSVVAQGVQWT, WIALGGCVAGALIVGAGVGSL, and ESTLMIAVSPLALVDMAFIAW.

This sequence belongs to the UPF0283 family.

The protein localises to the cell inner membrane. This Klebsiella pneumoniae subsp. pneumoniae (strain ATCC 700721 / MGH 78578) protein is UPF0283 membrane protein KPN78578_12740.